Consider the following 269-residue polypeptide: Regulatory protein RecX (269 aa).

Belongs to the RecX family.

The protein resides in the cytoplasm. Modulates RecA activity. The protein is Regulatory protein RecX of Geobacillus kaustophilus (strain HTA426).